The sequence spans 51 residues: Large ribosomal subunit protein bL33 (51 aa).

This sequence belongs to the bacterial ribosomal protein bL33 family.

This chain is Large ribosomal subunit protein bL33, found in Ruthia magnifica subsp. Calyptogena magnifica.